Consider the following 122-residue polypeptide: Large ribosomal subunit protein uL14 (122 aa).

This sequence belongs to the universal ribosomal protein uL14 family. Part of the 50S ribosomal subunit. Forms a cluster with proteins L3 and L19. In the 70S ribosome, L14 and L19 interact and together make contacts with the 16S rRNA in bridges B5 and B8.

Functionally, binds to 23S rRNA. Forms part of two intersubunit bridges in the 70S ribosome. In Desulfotalea psychrophila (strain LSv54 / DSM 12343), this protein is Large ribosomal subunit protein uL14.